Here is a 274-residue protein sequence, read N- to C-terminus: Large ribosomal subunit protein uL2 (274 aa).

A disordered region spans residues 223–256 (VVMNPVDHPHGGGEGKTGEGRHPVDPWGNLTKGY). Over residues 229–246 (DHPHGGGEGKTGEGRHPV) the composition is skewed to basic and acidic residues.

This sequence belongs to the universal ribosomal protein uL2 family. In terms of assembly, part of the 50S ribosomal subunit. Forms a bridge to the 30S subunit in the 70S ribosome.

One of the primary rRNA binding proteins. Required for association of the 30S and 50S subunits to form the 70S ribosome, for tRNA binding and peptide bond formation. It has been suggested to have peptidyltransferase activity; this is somewhat controversial. Makes several contacts with the 16S rRNA in the 70S ribosome. The protein is Large ribosomal subunit protein uL2 of Variovorax paradoxus (strain S110).